The chain runs to 859 residues: DNA (cytosine-5)-methyltransferase 3B (859 aa).

Positions 1 to 305 (MKGDSRHLNE…LATFNKLVSY (305 aa)) are interaction with DNMT1 and DNMT3A. Residues 25–226 (GNFSDQSSDT…RDGDSTEYQD (202 aa)) are disordered. A compositionally biased stretch (acidic residues) spans 85–94 (DRDDEVDDGN). Residue Ser96 is modified to Phosphoserine. Residue Lys102 forms a Glycyl lysine isopeptide (Lys-Gly) (interchain with G-Cter in SUMO2) linkage. The segment covering 103 to 114 (LTRETKDTRTRS) has biased composition (basic and acidic residues). At Thr112 the chain carries Phosphothreonine. Ser116 carries the post-translational modification Phosphoserine. Residues 167 to 179 (SSSASTPWSSPAS) show a composition bias toward low complexity. Positions 189 to 198 (KSVSTPSVDL) are enriched in polar residues. The span at 214–226 (AESRDGDSTEYQD) shows a compositional bias: basic and acidic residues. Position 216 is a phosphoserine (Ser216). The 59-residue stretch at 232–290 (IGDLVWGKIKGFSWWPAMVVSWKATSKRQAMPGMRWVQWFGDGKFSEISADKLVALGLF) folds into the PWWP domain. The tract at residues 348-429 (KPTGIEGLKP…ESRERMASEV (82 aa)) is disordered. Basic and acidic residues-rich tracts occupy residues 370–381 (RRSDSRNLEPRR) and 412–426 (GKDRGEDEESRERMA). Arg415 carries the citrulline modification. The ADD domain occupies 428–560 (EVTNNKGNLE…LQDFFTTDPD (133 aa)). A GATA-type; atypical zinc finger spans residues 439-469 (RCLSCGKKNPVSFHPLFEGGLCQSCRDRFLE). Positions 440–532 (CLSCGKKNPV…LQEPWSCYMC (93 aa)) are interaction with the PRC2/EED-EZH2 complex. Residues 480 to 536 (QSYCTVCCEGRELLLCSNTSCCRCFCVECLEVLVGAGTAEDAKLQEPWSCYMCLPQR) form a PHD-type; atypical zinc finger. Positions 581–859 (IRVLSLFDGI…APLKDYFACE (279 aa)) constitute an SAM-dependent MTase C5-type domain. S-adenosyl-L-methionine-binding positions include 588-592 (DGIAT) and Glu611. A Glycyl lysine isopeptide (Lys-Gly) (interchain with G-Cter in SUMO2) cross-link involves residue Lys623. Residue 633-635 (DVR) coordinates S-adenosyl-L-methionine. Cys657 is an active-site residue. 838 to 840 (RSW) is a binding site for S-adenosyl-L-methionine.

Belongs to the class I-like SAM-binding methyltransferase superfamily. C5-methyltransferase family. As to quaternary structure, interacts with CBX4, DNMT1, DNMT3A, SETDB1, UBE2I9, UBL1 and ZHX1. Interacts with SUV39H1 and BAZ2A/TIP5. Interacts with the PRC2/EED-EZH2 complex. Interacts with UHRF1. In terms of processing, sumoylated. Citrullinated by PADI4.

Its subcellular location is the nucleus. It catalyses the reaction a 2'-deoxycytidine in DNA + S-adenosyl-L-methionine = a 5-methyl-2'-deoxycytidine in DNA + S-adenosyl-L-homocysteine + H(+). Activated by binding to the regulatory factor DNMT3L. In terms of biological role, required for genome-wide de novo methylation and is essential for the establishment of DNA methylation patterns during development. DNA methylation is coordinated with methylation of histones. May preferentially methylates nucleosomal DNA within the nucleosome core region. May function as transcriptional co-repressor by associating with CBX4 and independently of DNA methylation. Seems to be involved in gene silencing. In association with DNMT1 and via the recruitment of CTCFL/BORIS, involved in activation of BAG1 gene expression by modulating dimethylation of promoter histone H3 at H3K4 and H3K9. Functions as a transcriptional corepressor by associating with ZHX1. Required for DUX4 silencing in somatic cells. The chain is DNA (cytosine-5)-methyltransferase 3B (Dnmt3b) from Mus musculus (Mouse).